Consider the following 268-residue polypeptide: Putative carbamate hydrolase RutD (268 aa).

Positions 15 to 119 (PVMVMIAGLG…VIVNGWLSLS (105 aa)) constitute an AB hydrolase-1 domain.

The protein belongs to the AB hydrolase superfamily. Hydrolase RutD family.

The enzyme catalyses carbamate + 2 H(+) = NH4(+) + CO2. Its function is as follows. Involved in pyrimidine catabolism. May facilitate the hydrolysis of carbamate, a reaction that can also occur spontaneously. This chain is Putative carbamate hydrolase RutD, found in Cronobacter sakazakii (strain ATCC BAA-894) (Enterobacter sakazakii).